The chain runs to 281 residues: GDT1-like protein 4 (281 aa).

The first 22 residues, 1-22 (MARRVSTTRLLLLLLLVAAAAA), serve as a signal peptide directing secretion. 6 helical membrane passes run 66 to 86 (AGLG…VSEI), 105 to 125 (TVLS…TGLG), 137 to 157 (TNSA…YIAW), 188 to 208 (IFSR…FLAE), 226 to 246 (AVGV…FAVV), and 258 to 278 (GTVA…SYFY).

The protein belongs to the GDT1 family.

The protein resides in the membrane. The chain is GDT1-like protein 4 from Oryza sativa subsp. indica (Rice).